Reading from the N-terminus, the 385-residue chain is Mannitol-1-phosphate 5-dehydrogenase (385 aa).

3–14 serves as a coordination point for NAD(+); it reads ALQFGAGNIGRG.

The protein belongs to the mannitol dehydrogenase family.

The enzyme catalyses D-mannitol 1-phosphate + NAD(+) = beta-D-fructose 6-phosphate + NADH + H(+). This Buchnera aphidicola subsp. Acyrthosiphon pisum (strain Tuc7) protein is Mannitol-1-phosphate 5-dehydrogenase.